The following is a 354-amino-acid chain: Ferrochelatase (354 aa).

Fe cation is bound by residues H191 and E271.

The protein belongs to the ferrochelatase family.

The protein localises to the cytoplasm. It carries out the reaction heme b + 2 H(+) = protoporphyrin IX + Fe(2+). It functions in the pathway porphyrin-containing compound metabolism; protoheme biosynthesis; protoheme from protoporphyrin-IX: step 1/1. Functionally, catalyzes the ferrous insertion into protoporphyrin IX. This is Ferrochelatase from Rickettsia bellii (strain OSU 85-389).